The sequence spans 71 residues: Protein translocase subunit SecE (71 aa).

The helical transmembrane segment at 43–63 (VAGAGILAVGAIGFIIYVLLT) threads the bilayer.

It belongs to the SecE/SEC61-gamma family. Component of the Sec protein translocase complex. Heterotrimer consisting of SecY (alpha), SecG (beta) and SecE (gamma) subunits. The heterotrimers can form oligomers, although 1 heterotrimer is thought to be able to translocate proteins. Interacts with the ribosome. May interact with SecDF, and other proteins may be involved.

Its subcellular location is the cell membrane. Its function is as follows. Essential subunit of the Sec protein translocation channel SecYEG. Clamps together the 2 halves of SecY. May contact the channel plug during translocation. The chain is Protein translocase subunit SecE from Methanosarcina acetivorans (strain ATCC 35395 / DSM 2834 / JCM 12185 / C2A).